We begin with the raw amino-acid sequence, 400 residues long: Probable glucan endo-1,6-beta-glucosidase B (400 aa).

The signal sequence occupies residues methionine 1–alanine 17. Asparagine 30 carries N-linked (GlcNAc...) asparagine glycosylation. Catalysis depends on glutamate 219, which acts as the Proton donor. Asparagine 272 carries an N-linked (GlcNAc...) asparagine glycan. The Nucleophile role is filled by glutamate 320.

The protein belongs to the glycosyl hydrolase 5 (cellulase A) family.

Its subcellular location is the secreted. The catalysed reaction is Random hydrolysis of (1-&gt;6)-linkages in (1-&gt;6)-beta-D-glucans.. Its function is as follows. Beta-glucanases participate in the metabolism of beta-glucan, the main structural component of the cell wall. Acts on lutean, pustulan and 1,6-oligo-beta-D-glucosides. This Neosartorya fischeri (strain ATCC 1020 / DSM 3700 / CBS 544.65 / FGSC A1164 / JCM 1740 / NRRL 181 / WB 181) (Aspergillus fischerianus) protein is Probable glucan endo-1,6-beta-glucosidase B (exgB).